A 727-amino-acid chain; its full sequence is ADP-ribosylation factor-binding protein GGA3 (727 aa).

The VHS domain maps to 16–146 (ATNPSNRQED…MLKRQGIVQS (131 aa)). 2 positions are modified to phosphoserine: serine 159 and serine 275. In terms of domain architecture, GAT spans 171–298 (DEEKSKLLAK…VINSYKTIIE (128 aa)). Positions 299-597 (GQIINGEVTT…VHVPLESIKP (299 aa)) are unstructured hinge. The disordered stretch occupies residues 334–385 (TPSSSSPVLAPAPAPPTSGIPILPPPPQTSGPPRSRSSSQAEAPSGPDSTNN). Over residues 343-363 (APAPAPPTSGIPILPPPPQTS) the composition is skewed to pro residues. Positions 364 to 374 (GPPRSRSSSQA) are enriched in low complexity. Residues 391 to 395 (DEELL) carry the DXXLL motif. Positions 400–419 (SDPAPTAPKESAGNSPWHLF) are disordered. The GAE domain maps to 598-719 (SSALPVTAYD…TELGEVDQFP (122 aa)).

The protein belongs to the GGA protein family. Monomer. Interacts with GGA1 and GGA2. Binds to clathrin and activated ARFs, such as ARF1, ARF5 and ARF6. Binds RABEP1 and RABGEF1. Interacts with the membrane proteins M6PR/CD-MPR and IGF2R/CI-MPR and the accessory proteins SYNRG, EPN4, NECAP1, NECAP2 and AFTPH/aftiphilin. Interacts with TSG101 and UBC. Interacts with ADRA2B. Interacts with NTRK1; the interaction is independent of NTRK1 activation and ubiquitination. Interacts (via VHS domain) with BACE1 (via DXXLL motif). In terms of processing, phosphorylated by CK2 and dephosphorylated by PP2A. Phosphorylation of GGA3 allows the internal DXXLL motif to bind the VHS domain and to inhibit the recognition of cargo signals. Post-translationally, ubiquitinated. Proteolytically cleaved during apoptosis by CASP3.

The protein resides in the golgi apparatus. It localises to the trans-Golgi network membrane. It is found in the endosome membrane. Its subcellular location is the early endosome membrane. The protein localises to the recycling endosome membrane. Functionally, plays a role in protein sorting and trafficking between the trans-Golgi network (TGN) and endosomes. Mediates the ARF-dependent recruitment of clathrin to the TGN and binds ubiquitinated proteins and membrane cargo molecules with a cytosolic acidic cluster-dileucine (DXXLL) motif. Mediates export of the GPCR receptor ADRA2B to the cell surface. Involved in BACE1 transport and sorting as well as regulation of BACE1 protein levels. Regulates retrograde transport of BACE1 from endosomes to the trans-Golgi network via interaction through the VHS motif and dependent of BACE1 phosphorylation. Modulates BACE1 protein levels independently of the interaction between VHS domain and DXXLL motif through recognition of ubiquitination. Key player in a novel DXXLL-mediated endosomal sorting machinery to the recycling pathway that targets NTRK1 to the plasma membrane. This is ADP-ribosylation factor-binding protein GGA3 from Rattus norvegicus (Rat).